A 222-amino-acid chain; its full sequence is 3-demethoxyubiquinol 3-hydroxylase (222 aa).

E71, E101, H104, E153, E185, and H188 together coordinate Fe cation.

It belongs to the COQ7 family. It depends on Fe cation as a cofactor.

It localises to the cell membrane. The enzyme catalyses a 5-methoxy-2-methyl-3-(all-trans-polyprenyl)benzene-1,4-diol + AH2 + O2 = a 3-demethylubiquinol + A + H2O. The protein operates within cofactor biosynthesis; ubiquinone biosynthesis. Its function is as follows. Catalyzes the hydroxylation of 2-nonaprenyl-3-methyl-6-methoxy-1,4-benzoquinol during ubiquinone biosynthesis. This is 3-demethoxyubiquinol 3-hydroxylase from Bordetella bronchiseptica (strain ATCC BAA-588 / NCTC 13252 / RB50) (Alcaligenes bronchisepticus).